The following is a 582-amino-acid chain: PX domain-containing protein kinase-like protein (582 aa).

Residues 14 to 126 (LDDTVPLTAA…KFLDPNNYSA (113 aa)) enclose the PX domain. Residues 88 to 481 (FIAERQRGLQ…VENSEEQPVK (394 aa)) enclose the Protein kinase domain. Positions 433–550 (EQKQIHQHRR…APFLPQPVNG (118 aa)) are disordered. 2 stretches are compositionally biased toward basic residues: residues 437–448 (IHQHRRLTRAQS) and 457–469 (KRRKILARKKSKR). Positions 483 to 514 (SNSNNSAGSGASSPLTSPSSPTPPSTAGLSSA) are enriched in low complexity. Pro residues predominate over residues 515–531 (LPPPPPPPPPPPPPAGP). The WH2 domain maps to 548 to 567 (VNGVNRGALLSSIQNFQKGT).

It belongs to the protein kinase superfamily. As to expression, isoform 1 is present in all tissues examined. Isoform 2 is found in all tissues except skeletal muscle and very low levels in spleen. Both isoforms are widely expressed throughout the nervous system however levels of isoform 2 are higher in purified hippocampal and cortical neurons whereas glial cells express more isoform 1 than isoform 2.

The protein localises to the cytoplasm. It is found in the cell membrane. Binds to and modulates brain Na,K-ATPase subunits ATP1B1 and ATP1B3 and may thereby participate in the regulation of electrical excitability and synaptic transmission. May not display kinase activity. The sequence is that of PX domain-containing protein kinase-like protein from Mus musculus (Mouse).